We begin with the raw amino-acid sequence, 305 residues long: Ornithine carbamoyltransferase (305 aa).

Residues 47 to 50 (STRT), arginine 98, and 125 to 128 (HPCQ) each bind carbamoyl phosphate. L-ornithine contacts are provided by residues asparagine 156, aspartate 221, and 225 to 226 (SM). Carbamoyl phosphate contacts are provided by residues 262–263 (CL) and arginine 290.

The protein belongs to the aspartate/ornithine carbamoyltransferase superfamily. OTCase family.

It localises to the cytoplasm. It catalyses the reaction carbamoyl phosphate + L-ornithine = L-citrulline + phosphate + H(+). Its pathway is amino-acid biosynthesis; L-arginine biosynthesis; L-arginine from L-ornithine and carbamoyl phosphate: step 1/3. In terms of biological role, reversibly catalyzes the transfer of the carbamoyl group from carbamoyl phosphate (CP) to the N(epsilon) atom of ornithine (ORN) to produce L-citrulline. The polypeptide is Ornithine carbamoyltransferase (Methanococcus vannielii (strain ATCC 35089 / DSM 1224 / JCM 13029 / OCM 148 / SB)).